We begin with the raw amino-acid sequence, 262 residues long: Tryptophan synthase alpha chain (262 aa).

Residues Glu-48 and Asp-59 each act as proton acceptor in the active site.

This sequence belongs to the TrpA family. Tetramer of two alpha and two beta chains.

The catalysed reaction is (1S,2R)-1-C-(indol-3-yl)glycerol 3-phosphate + L-serine = D-glyceraldehyde 3-phosphate + L-tryptophan + H2O. The protein operates within amino-acid biosynthesis; L-tryptophan biosynthesis; L-tryptophan from chorismate: step 5/5. The alpha subunit is responsible for the aldol cleavage of indoleglycerol phosphate to indole and glyceraldehyde 3-phosphate. This is Tryptophan synthase alpha chain from Helicobacter pylori (strain HPAG1).